We begin with the raw amino-acid sequence, 263 residues long: Copper homeostasis protein cutC homolog (263 aa).

Belongs to the CutC family.

Involved in copper homeostasis. The chain is Copper homeostasis protein cutC homolog from Drosophila melanogaster (Fruit fly).